The sequence spans 328 residues: tRNA uridine(34) hydroxylase (328 aa).

Positions 130–224 constitute a Rhodanese domain; sequence LDKDTVVLDT…YGKDPEVQGE (95 aa). C184 (cysteine persulfide intermediate) is an active-site residue.

This sequence belongs to the TrhO family.

The catalysed reaction is uridine(34) in tRNA + AH2 + O2 = 5-hydroxyuridine(34) in tRNA + A + H2O. In terms of biological role, catalyzes oxygen-dependent 5-hydroxyuridine (ho5U) modification at position 34 in tRNAs. This chain is tRNA uridine(34) hydroxylase, found in Streptococcus pneumoniae (strain P1031).